Reading from the N-terminus, the 331-residue chain is uncharacterized protein (331 aa).

Disordered stretches follow at residues 131 to 163 (ISHA…KKRS) and 190 to 209 (DEQK…VQSS). Over residues 140–162 (RPKPTKPRASRKRAAIAQSKKKR) the composition is skewed to basic residues. The segment covering 195–209 (RQSTSQPDKEIVQSS) has biased composition (polar residues).

This is an uncharacterized protein from Caenorhabditis elegans.